Here is a 216-residue protein sequence, read N- to C-terminus: DNA gyrase subunit B (216 aa).

In terms of domain architecture, Toprim spans Ser140 to Ile216.

This sequence belongs to the type II topoisomerase GyrB family. As to quaternary structure, heterotetramer, composed of two GyrA and two GyrB chains. In the heterotetramer, GyrA contains the active site tyrosine that forms a transient covalent intermediate with DNA, while GyrB binds cofactors and catalyzes ATP hydrolysis.

It localises to the cytoplasm. The catalysed reaction is ATP-dependent breakage, passage and rejoining of double-stranded DNA.. In terms of biological role, a type II topoisomerase that negatively supercoils closed circular double-stranded (ds) DNA in an ATP-dependent manner to modulate DNA topology and maintain chromosomes in an underwound state. Negative supercoiling favors strand separation, and DNA replication, transcription, recombination and repair, all of which involve strand separation. Also able to catalyze the interconversion of other topological isomers of dsDNA rings, including catenanes and knotted rings. Type II topoisomerases break and join 2 DNA strands simultaneously in an ATP-dependent manner. This Acinetobacter sp. (strain ATCC 33308 / BD413 ErpE27) protein is DNA gyrase subunit B (gyrB).